A 276-amino-acid polypeptide reads, in one-letter code: Bis(5'-nucleosyl)-tetraphosphatase, symmetrical (276 aa).

It belongs to the Ap4A hydrolase family.

The enzyme catalyses P(1),P(4)-bis(5'-adenosyl) tetraphosphate + H2O = 2 ADP + 2 H(+). Hydrolyzes diadenosine 5',5'''-P1,P4-tetraphosphate to yield ADP. This is Bis(5'-nucleosyl)-tetraphosphatase, symmetrical from Legionella pneumophila (strain Lens).